The chain runs to 456 residues: Putative sodium-coupled neutral amino acid transporter 11 (456 aa).

Residues 1-25 (MRAGPRRQHLLPPQDNRAAVGYQRQ) are disordered. A helical membrane pass occupies residues 58–78 (FNVVNSIIGSGIIDFSLILLI). Asparagine 94 is a glycosylation site (N-linked (GlcNAc...) asparagine). 6 helical membrane-spanning segments follow: residues 98-118 (GFPG…IAMI), 143-163 (VFIG…LPLS), 171-191 (LGKV…IVMA), 206-226 (AWVF…FAFI), 252-272 (MSIV…YLTF), and 291-313 (VTFG…CFVT). N-linked (GlcNAc...) asparagine glycosylation is present at asparagine 325. 3 consecutive transmembrane segments (helical) span residues 329–349 (VFHI…SLLI), 351–371 (CLGI…IFII), and 390–410 (IMSY…FVMA).

Belongs to the amino acid/polyamine transporter 2 family.

It is found in the membrane. Putative sodium-dependent amino acid/proton antiporter. This Macaca fascicularis (Crab-eating macaque) protein is Putative sodium-coupled neutral amino acid transporter 11 (SLC38A11).